A 176-amino-acid polypeptide reads, in one-letter code: Nucleoside triphosphate/diphosphate phosphatase (176 aa).

R23 (proton donor) is an active-site residue. Mg(2+) is bound by residues N87, D103, D105, D107, D120, and E123.

It belongs to the Ntdp family. Mg(2+) serves as cofactor.

The catalysed reaction is a ribonucleoside 5'-triphosphate + H2O = a ribonucleoside 5'-diphosphate + phosphate + H(+). It catalyses the reaction a ribonucleoside 5'-diphosphate + H2O = a ribonucleoside 5'-phosphate + phosphate + H(+). In terms of biological role, has nucleoside phosphatase activity towards nucleoside triphosphates and nucleoside diphosphates. This is Nucleoside triphosphate/diphosphate phosphatase (ygaC) from Bacillus subtilis (strain 168).